A 577-amino-acid chain; its full sequence is Proline--tRNA ligase (577 aa).

This sequence belongs to the class-II aminoacyl-tRNA synthetase family. ProS type 1 subfamily. Homodimer.

It is found in the cytoplasm. The catalysed reaction is tRNA(Pro) + L-proline + ATP = L-prolyl-tRNA(Pro) + AMP + diphosphate. Functionally, catalyzes the attachment of proline to tRNA(Pro) in a two-step reaction: proline is first activated by ATP to form Pro-AMP and then transferred to the acceptor end of tRNA(Pro). As ProRS can inadvertently accommodate and process non-cognate amino acids such as alanine and cysteine, to avoid such errors it has two additional distinct editing activities against alanine. One activity is designated as 'pretransfer' editing and involves the tRNA(Pro)-independent hydrolysis of activated Ala-AMP. The other activity is designated 'posttransfer' editing and involves deacylation of mischarged Ala-tRNA(Pro). The misacylated Cys-tRNA(Pro) is not edited by ProRS. In Chlamydia felis (strain Fe/C-56) (Chlamydophila felis), this protein is Proline--tRNA ligase.